A 166-amino-acid chain; its full sequence is Protein C2-DOMAIN ABA-RELATED 11 (166 aa).

Met-1 is subject to N-acetylmethionine. A C2 domain is found at 1 to 103; the sequence is MGEPLGLLQV…ISVARLRHVV (103 aa). Gly-2 carries the post-translational modification N-acetylglycine; in Protein C2-DOMAIN ABA-RELATED 11, N-terminally processed. Positions 21, 22, 27, 73, 74, 75, and 81 each coordinate Ca(2+).

Belongs to the plant CAR protein family. In terms of assembly, binds to PYR/PYL/RCAR abscisic acid intracellular receptors in an ABA-independent manner, both at the plasma membrane and in the nucleus.

It localises to the cell membrane. Its subcellular location is the nucleus. Its function is as follows. Stimulates the GTPase/ATPase activities of Obg-like ATPases. Mediates the transient calcium-dependent interaction of PYR/PYL/RCAR abscisic acid (ABA) receptors with the plasma membrane and thus regulates ABA sensitivity. The sequence is that of Protein C2-DOMAIN ABA-RELATED 11 from Arabidopsis thaliana (Mouse-ear cress).